A 309-amino-acid polypeptide reads, in one-letter code: Homoserine O-succinyltransferase (309 aa).

The active-site Acyl-thioester intermediate is the C142. Substrate is bound by residues K163 and S192. Residue H235 is the Proton acceptor of the active site. Residue E237 is part of the active site. Substrate is bound at residue R249.

Belongs to the MetA family. Homodimer.

It is found in the cytoplasm. It carries out the reaction L-homoserine + succinyl-CoA = O-succinyl-L-homoserine + CoA. It functions in the pathway amino-acid biosynthesis; L-methionine biosynthesis via de novo pathway; O-succinyl-L-homoserine from L-homoserine: step 1/1. In terms of biological role, transfers a succinyl group from succinyl-CoA to L-homoserine, forming succinyl-L-homoserine. The chain is Homoserine O-succinyltransferase from Salmonella arizonae (strain ATCC BAA-731 / CDC346-86 / RSK2980).